A 78-amino-acid polypeptide reads, in one-letter code: Small ribosomal subunit protein bS20 (78 aa).

It belongs to the bacterial ribosomal protein bS20 family.

In terms of biological role, binds directly to 16S ribosomal RNA. This chain is Small ribosomal subunit protein bS20, found in Streptococcus pneumoniae serotype 4 (strain ATCC BAA-334 / TIGR4).